We begin with the raw amino-acid sequence, 337 residues long: Anthranilate phosphoribosyltransferase (337 aa).

5-phospho-alpha-D-ribose 1-diphosphate is bound by residues glycine 82, 85 to 86 (GD), threonine 90, 92 to 95 (NIST), 110 to 118 (KHGNRAMSS), and threonine 122. Residue glycine 82 coordinates anthranilate. Serine 94 contributes to the Mg(2+) binding site. Asparagine 113 contacts anthranilate. Position 168 (arginine 168) interacts with anthranilate. The Mg(2+) site is built by aspartate 226 and glutamate 227.

This sequence belongs to the anthranilate phosphoribosyltransferase family. As to quaternary structure, homodimer. Mg(2+) serves as cofactor.

The catalysed reaction is N-(5-phospho-beta-D-ribosyl)anthranilate + diphosphate = 5-phospho-alpha-D-ribose 1-diphosphate + anthranilate. It participates in amino-acid biosynthesis; L-tryptophan biosynthesis; L-tryptophan from chorismate: step 2/5. In terms of biological role, catalyzes the transfer of the phosphoribosyl group of 5-phosphorylribose-1-pyrophosphate (PRPP) to anthranilate to yield N-(5'-phosphoribosyl)-anthranilate (PRA). In Phenylobacterium zucineum (strain HLK1), this protein is Anthranilate phosphoribosyltransferase.